The following is a 1495-amino-acid chain: Pregnancy zone protein (1495 aa).

The first 24 residues, methionine 1–threonine 24, serve as a signal peptide directing secretion. Cysteine 48 and cysteine 86 are joined by a disulfide. N-linked (GlcNAc...) asparagine glycosylation is found at asparagine 55 and asparagine 157. Cystine bridges form between cysteine 249–cysteine 298 and cysteine 267–cysteine 286. N-linked (GlcNAc...) asparagine glycosylation is found at asparagine 382, asparagine 405, and asparagine 412. An intrachain disulfide couples cysteine 469 to cysteine 562. Asparagine 568 carries an N-linked (GlcNAc...) asparagine glycan. 6 disulfides stabilise this stretch: cysteine 594-cysteine 783, cysteine 642-cysteine 689, cysteine 833-cysteine 861, cysteine 859-cysteine 895, cysteine 933-cysteine 1339, and cysteine 1092-cysteine 1140. Positions proline 686–arginine 744 are bait region. N-linked (GlcNAc...) asparagine glycans are attached at residues asparagine 881 and asparagine 942. Residues cysteine 984–glutamine 987 constitute a cross-link (isoglutamyl cysteine thioester (Cys-Gln)). N-linked (GlcNAc...) asparagine glycosylation occurs at asparagine 1003. Residues asparagine 1385 and asparagine 1443 are each glycosylated (N-linked (GlcNAc...) asparagine).

The protein belongs to the protease inhibitor I39 (alpha-2-macroglobulin) family. Highest expression in liver, medium expression in ovary, heart and stomach. Low expression in lung, kidney and uterus. Protein found in plasma.

The protein resides in the secreted. Its function is as follows. Is able to inhibit all four classes of proteinases by a unique 'trapping' mechanism. This protein has a peptide stretch, called the 'bait region' which contains specific cleavage sites for different proteinases. When a proteinase cleaves the bait region, a conformational change is induced in the protein which traps the proteinase. The entrapped enzyme remains active against low molecular weight substrates (activity against high molecular weight substrates is greatly reduced). Following cleavage in the bait region, a thioester bond is hydrolyzed and mediates the covalent binding of the protein to the proteinase. This Mus musculus (Mouse) protein is Pregnancy zone protein (Pzp).